A 269-amino-acid chain; its full sequence is 4-hydroxy-tetrahydrodipicolinate reductase (269 aa).

Residues 10 to 15, glutamate 36, 99 to 101, and 123 to 126 contribute to the NAD(+) site; these read GANGRM, GTT, and AANF. The Proton donor/acceptor role is filled by histidine 156. Histidine 157 serves as a coordination point for (S)-2,3,4,5-tetrahydrodipicolinate. The Proton donor role is filled by lysine 160. 166 to 167 serves as a coordination point for (S)-2,3,4,5-tetrahydrodipicolinate; it reads GT.

The protein belongs to the DapB family.

It is found in the cytoplasm. The enzyme catalyses (S)-2,3,4,5-tetrahydrodipicolinate + NAD(+) + H2O = (2S,4S)-4-hydroxy-2,3,4,5-tetrahydrodipicolinate + NADH + H(+). It carries out the reaction (S)-2,3,4,5-tetrahydrodipicolinate + NADP(+) + H2O = (2S,4S)-4-hydroxy-2,3,4,5-tetrahydrodipicolinate + NADPH + H(+). Its pathway is amino-acid biosynthesis; L-lysine biosynthesis via DAP pathway; (S)-tetrahydrodipicolinate from L-aspartate: step 4/4. Functionally, catalyzes the conversion of 4-hydroxy-tetrahydrodipicolinate (HTPA) to tetrahydrodipicolinate. This Neisseria meningitidis serogroup B (strain ATCC BAA-335 / MC58) protein is 4-hydroxy-tetrahydrodipicolinate reductase.